A 472-amino-acid chain; its full sequence is MSTREGSLWGGRFADGPSDALAALSKSTHFDWVLAPYDIVASRAHTVILYRAGLLSEEQRDGLLAGLDSLAEDVADGSFTPLVTDEDVHAALERGLIDRVGPDLGGRLRAGRSRNDQVATLFRMWLRDAVRRVAAGALDVVGALVAQAAAHPEAIMPGKTHLQSAQPVLLAHHLLAHAHPLLRDVDRIVDFDKRAAVSPYGSGALAGSSLGLDPDAIAAELGFASAADNSIDATASRDFAAEAAFVFAMIGVDLSRLAEDVILWSSTEFGYVKLHDAWSTGSSIMPQKKNPDIAELARGKSGRLIGNLAGLLATLKAQPLAYNRDLQEDKEPVFDAVAQLELVLPAMAGLVGSLTFDVQRMAALAPAGYTLATDIAEWLVRQGVPFRSAHEAAGAAVRAAEQRAVGLDELTDDELAAISPALTPQVREVLTIEGSVSSRDARGGTAPARVAEQIDTVAATAARLRERLGGPA.

The protein belongs to the lyase 1 family. Argininosuccinate lyase subfamily.

It localises to the cytoplasm. It catalyses the reaction 2-(N(omega)-L-arginino)succinate = fumarate + L-arginine. Its pathway is amino-acid biosynthesis; L-arginine biosynthesis; L-arginine from L-ornithine and carbamoyl phosphate: step 3/3. This chain is Argininosuccinate lyase, found in Mycolicibacterium paratuberculosis (strain ATCC BAA-968 / K-10) (Mycobacterium paratuberculosis).